We begin with the raw amino-acid sequence, 320 residues long: TPR repeat-containing protein MJ0263 (320 aa).

TPR repeat units follow at residues 12 to 45, 46 to 79, 80 to 113, 114 to 147, 148 to 181, 182 to 215, 216 to 249, 250 to 283, and 289 to 320; these read ILKD…DKDN, PLVL…EGTS, LLSL…SKPC, YLSP…YPNL, TSIL…KKDD, AHAW…NENL, VHVY…FPND, VEAK…KNVK, and KSSI…DNNI.

The chain is TPR repeat-containing protein MJ0263 from Methanocaldococcus jannaschii (strain ATCC 43067 / DSM 2661 / JAL-1 / JCM 10045 / NBRC 100440) (Methanococcus jannaschii).